The sequence spans 134 residues: Small ribosomal subunit protein bS16 (134 aa).

Residues 79 to 134 (AGIAKRPSRNNPTKGEPGKKAQERLALAKQAEEEASAKAAEAAAAAAAPAEEAASE) form a disordered region. Low complexity predominate over residues 115–134 (AKAAEAAAAAAAPAEEAASE).

This sequence belongs to the bacterial ribosomal protein bS16 family.

This chain is Small ribosomal subunit protein bS16, found in Brucella abortus (strain S19).